We begin with the raw amino-acid sequence, 257 residues long: MTLAVRVIPCLDVDAGRVVKGVNFENLRDAGDPVELAAAYDAQGADELTFLDVTASTADRGTMLDVVSRTAEQVFIPLTVGGGVRTVEDVDRLLRAGADKVSVNTAAIARPELLRELSERFGSQCIVLSVDARTVPQGQPDTPSGWEVTTHGGKRGTGIDAVEWAVRGAELGVGEILLNSMDADGTKAGFDLPMIRAVRAAVHVPVIASGGAGAVEHFAPAVGAGADAVLAASVFHFGDMTIGDVKKSMREEGITVR.

Catalysis depends on residues aspartate 12 and aspartate 131.

It belongs to the HisA/HisF family. As to quaternary structure, heterodimer of HisH and HisF.

The protein localises to the cytoplasm. The catalysed reaction is 5-[(5-phospho-1-deoxy-D-ribulos-1-ylimino)methylamino]-1-(5-phospho-beta-D-ribosyl)imidazole-4-carboxamide + L-glutamine = D-erythro-1-(imidazol-4-yl)glycerol 3-phosphate + 5-amino-1-(5-phospho-beta-D-ribosyl)imidazole-4-carboxamide + L-glutamate + H(+). It functions in the pathway amino-acid biosynthesis; L-histidine biosynthesis; L-histidine from 5-phospho-alpha-D-ribose 1-diphosphate: step 5/9. Functionally, IGPS catalyzes the conversion of PRFAR and glutamine to IGP, AICAR and glutamate. The HisF subunit catalyzes the cyclization activity that produces IGP and AICAR from PRFAR using the ammonia provided by the HisH subunit. This Rhodococcus jostii (strain RHA1) protein is Imidazole glycerol phosphate synthase subunit HisF.